Consider the following 59-residue polypeptide: MTESPQFDRRMLEALVCPVSQSGLSYDAERQELVSRQARLAFPIRDGIPIMLVSEAREL.

It belongs to the UPF0434 family.

This chain is UPF0434 protein Rsph17025_2896, found in Cereibacter sphaeroides (strain ATCC 17025 / ATH 2.4.3) (Rhodobacter sphaeroides).